We begin with the raw amino-acid sequence, 386 residues long: Protein phosphatase methylesterase 1 (386 aa).

Residues 1 to 38 (MSALEKSMHLGRLPSRPPLPGSGGSQSGAKMRMGPGRK) form a disordered region. Position 15 is a phosphoserine (Ser15). Position 16 is an asymmetric dimethylarginine; alternate (Arg16). The residue at position 16 (Arg16) is an Omega-N-methylarginine; alternate. Ser42 is subject to Phosphoserine. Residues Ser156 and Asp181 contribute to the active site. Residues 254 to 265 (IIEEEEEDEEGS) show a composition bias toward acidic residues. The segment at 254 to 280 (IIEEEEEDEEGSESISKRKKEDDMETK) is disordered. The segment covering 268 to 280 (ISKRKKEDDMETK) has biased composition (basic and acidic residues). His349 is a catalytic residue.

The protein belongs to the AB hydrolase superfamily. Binds PPP2CA and PPP2CB. Post-translationally, phosphorylated by SIK1 following increases in intracellular sodium, leading to dissociation from the protein phosphatase 2A (PP2A) complex and subsequent dephosphorylation of sodium/potassium-transporting ATPase ATP1A1.

The catalysed reaction is [phosphatase 2A protein]-C-terminal L-leucine methyl ester + H2O = [phosphatase 2A protein]-C-terminal L-leucine + methanol + H(+). Functionally, demethylates proteins that have been reversibly carboxymethylated. Demethylates PPP2CB (in vitro) and PPP2CA. Binding to PPP2CA displaces the manganese ion and inactivates the enzyme. This Homo sapiens (Human) protein is Protein phosphatase methylesterase 1 (PPME1).